The chain runs to 335 residues: N-lysine methyltransferase KMT5A-A (335 aa).

Disordered stretches follow at residues 1–91 and 133–183; these read MGRG…EVEK and LPPE…EIES. A compositionally biased stretch (basic and acidic residues) spans 67-91; the sequence is SVTHHESKCLGKPSTETRKKAEVEK. Basic residues predominate over residues 145 to 161; that stretch reads VKNKPLRKKTQRQKSPN. The region spanning 199–320 is the SET domain; the sequence is EGIKMHMITG…VGEELLYDYG (122 aa). S-adenosyl-L-methionine is bound by residues 209–211, Tyr-254, and 281–282; these read KGR and NH.

This sequence belongs to the class V-like SAM-binding methyltransferase superfamily. Histone-lysine methyltransferase family. PR/SET subfamily.

The protein resides in the nucleus. The protein localises to the chromosome. The catalysed reaction is L-lysyl(20)-[histone H4] + S-adenosyl-L-methionine = N(6)-methyl-L-lysyl(20)-[histone H4] + S-adenosyl-L-homocysteine + H(+). It catalyses the reaction L-lysyl-[protein] + S-adenosyl-L-methionine = N(6)-methyl-L-lysyl-[protein] + S-adenosyl-L-homocysteine + H(+). Its function is as follows. Protein-lysine N-methyltransferase that monomethylates both histones and non-histone proteins. Specifically monomethylates 'Lys-20' of histone H4 (H4K20me1). H4K20me1 is enriched during mitosis and represents a specific tag for epigenetic transcriptional repression. Mainly functions in euchromatin regions, thereby playing a central role in the silencing of euchromatic genes. Required for cell proliferation, probably by contributing to the maintenance of proper higher-order structure of DNA during mitosis. Involved in chromosome condensation and proper cytokinesis. This chain is N-lysine methyltransferase KMT5A-A, found in Xenopus laevis (African clawed frog).